The primary structure comprises 309 residues: Olfactory receptor 4A47 (309 aa).

Residues 1–23 (MEPRKNVTDFVLLGFTQNPKEQK) are Extracellular-facing. The N-linked (GlcNAc...) asparagine glycan is linked to N6. Residues 24–47 (VLFVMFLLFYILTMVGNLLIVVTV) form a helical membrane-spanning segment. Topologically, residues 48 to 55 (TVSETLGS) are cytoplasmic. The helical transmembrane segment at 56 to 77 (PMYFFLAGLSFIDIIYSSSISP) threads the bilayer. The Extracellular segment spans residues 78 to 98 (RLISGLFFGNNSISFQSCMAQ). N-linked (GlcNAc...) asparagine glycosylation occurs at N87. C95 and C187 are joined by a disulfide. A helical membrane pass occupies residues 99–118 (LFIEHIFGGSEVFLLLVMAY). Over 119–137 (DCYVAICKPLHYLVIMRQW) the chain is Cytoplasmic. Residues 138 to 156 (VCVVLLVVSWVGGFLHSVF) traverse the membrane as a helical segment. Topologically, residues 157 to 193 (QLSIIYGLPFCGPNVIDHFFCDMYPLLKLVCTDTHAI) are extracellular. Residues 194–217 (GLLVVANGGLACTIVFLLLLISYG) traverse the membrane as a helical segment. Over 218 to 233 (VILHSLKNLSQKGRQK) the chain is Cytoplasmic. A helical membrane pass occupies residues 234 to 256 (ALSTCSSHMTVVVFFFVPCIFMY). At 257 to 267 (ARPARTFPIDK) the chain is on the extracellular side. Residues 268-287 (SVSVFYTVITPMLNPLIYTL) form a helical membrane-spanning segment. At 288 to 309 (RNSEMTSAMKKLWRRDLISSST) the chain is on the cytoplasmic side.

Belongs to the G-protein coupled receptor 1 family.

The protein localises to the cell membrane. Odorant receptor. This Homo sapiens (Human) protein is Olfactory receptor 4A47 (OR4A47).